The following is a 203-amino-acid chain: Protein-methionine-sulfoxide reductase heme-binding subunit MsrQ (203 aa).

6 helical membrane passes run 10-30 (IFVL…MGLL), 37-57 (IMMD…LSMT), 75-95 (LGLW…VFIL), 110-130 (PYII…VTSN), 147-167 (LVYV…RSDL), and 169-189 (EWAI…PPVW).

Belongs to the MsrQ family. In terms of assembly, heterodimer of a catalytic subunit (MsrP) and a heme-binding subunit (MsrQ). It depends on FMN as a cofactor. The cofactor is heme b.

It localises to the cell inner membrane. Part of the MsrPQ system that repairs oxidized periplasmic proteins containing methionine sulfoxide residues (Met-O), using respiratory chain electrons. Thus protects these proteins from oxidative-stress damage caused by reactive species of oxygen and chlorine generated by the host defense mechanisms. MsrPQ is essential for the maintenance of envelope integrity under bleach stress, rescuing a wide series of structurally unrelated periplasmic proteins from methionine oxidation. MsrQ provides electrons for reduction to the reductase catalytic subunit MsrP, using the quinone pool of the respiratory chain. The protein is Protein-methionine-sulfoxide reductase heme-binding subunit MsrQ of Pseudomonas entomophila (strain L48).